The following is an 88-amino-acid chain: ATP synthase epsilon chain (88 aa).

Belongs to the ATPase epsilon chain family. As to quaternary structure, F-type ATPases have 2 components, CF(1) - the catalytic core - and CF(0) - the membrane proton channel. CF(1) has five subunits: alpha(3), beta(3), gamma(1), delta(1), epsilon(1). CF(0) has three main subunits: a, b and c.

The protein resides in the cell inner membrane. Functionally, produces ATP from ADP in the presence of a proton gradient across the membrane. The protein is ATP synthase epsilon chain (atpC) of Chlorobium limicola.